The sequence spans 62 residues: Sperm protamine P1 (62 aa).

The disordered stretch occupies residues 1–62; it reads MARCRRHSRS…RYSRRGRRRY (62 aa).

Belongs to the protamine P1 family. In terms of tissue distribution, testis.

The protein resides in the nucleus. It localises to the chromosome. Its function is as follows. Protamines substitute for histones in the chromatin of sperm during the haploid phase of spermatogenesis. They compact sperm DNA into a highly condensed, stable and inactive complex. The chain is Sperm protamine P1 (PRM1) from Planigale maculata sinualis (Common planigale).